A 181-amino-acid chain; its full sequence is Ribosome maturation factor RimM (181 aa).

Positions 103-181 (EGDYYWSQLE…EMVVDWDPEF (79 aa)) constitute a PRC barrel domain.

The protein belongs to the RimM family. In terms of assembly, binds ribosomal protein uS19.

It is found in the cytoplasm. In terms of biological role, an accessory protein needed during the final step in the assembly of 30S ribosomal subunit, possibly for assembly of the head region. Essential for efficient processing of 16S rRNA. May be needed both before and after RbfA during the maturation of 16S rRNA. It has affinity for free ribosomal 30S subunits but not for 70S ribosomes. The sequence is that of Ribosome maturation factor RimM from Marinomonas sp. (strain MWYL1).